The chain runs to 155 residues: Ribosomal RNA large subunit methyltransferase H (155 aa).

S-adenosyl-L-methionine contacts are provided by leucine 72 and glycine 104.

It belongs to the RNA methyltransferase RlmH family. In terms of assembly, homodimer.

It is found in the cytoplasm. It carries out the reaction pseudouridine(1915) in 23S rRNA + S-adenosyl-L-methionine = N(3)-methylpseudouridine(1915) in 23S rRNA + S-adenosyl-L-homocysteine + H(+). Its function is as follows. Specifically methylates the pseudouridine at position 1915 (m3Psi1915) in 23S rRNA. This chain is Ribosomal RNA large subunit methyltransferase H, found in Fusobacterium nucleatum subsp. nucleatum (strain ATCC 25586 / DSM 15643 / BCRC 10681 / CIP 101130 / JCM 8532 / KCTC 2640 / LMG 13131 / VPI 4355).